Consider the following 150-residue polypeptide: MKIWVDADACPGVIKDILFRAAERAEIAVTLVANHAMRIPPSRFIQLVTVSSGFDVADNEIVRRAAPGDLVITADIPLASEVIDKGALALNPRGELYTEHNIKSILNMRDFMDTMRASGVQTGGPAAIGQSEKQAFGNQLDRLITKYHKR.

Belongs to the UPF0178 family.

The protein is UPF0178 protein Shew_2726 of Shewanella loihica (strain ATCC BAA-1088 / PV-4).